We begin with the raw amino-acid sequence, 248 residues long: Probable transcriptional regulatory protein FTN_1028 (248 aa).

It belongs to the TACO1 family.

Its subcellular location is the cytoplasm. In Francisella tularensis subsp. novicida (strain U112), this protein is Probable transcriptional regulatory protein FTN_1028.